A 753-amino-acid chain; its full sequence is Striatin-4 (753 aa).

The disordered stretch occupies residues 10–65 (VAAAASSCRPLGSGAGPGPTGAAPVSAPAPGPGPAGKGGGGGGSPGPTAGPEPLSL). Residues 43-54 (PAGKGGGGGGSP) show a composition bias toward gly residues. Ser-53 bears the Phosphoserine mark. Residues 69-136 (LHFIQHEWAR…QERAKYHKLK (68 aa)) are a coiled coil. The tract at residues 71 to 79 (FIQHEWARF) is caveolin-binding. Residues 165–182 (ENSPLVWKEGRQLLRQYL) are calmodulin-binding. Residue Ser-206 is modified to Phosphoserine. Disordered regions lie at residues 213–232 (VEPSEGAPRAPPGPAGLSGG), 271–345 (CEDE…SPHE), and 363–382 (VDGLPPKVTGPPPGTPQPRP). Composition is skewed to acidic residues over residues 271–283 (CEDEDSDEDDELD) and 302–317 (EMEDEDEEDDSEDAIN). At Ser-276 the chain carries Phosphoserine. Positions 332–345 (PDPRRCTVDGSPHE) are enriched in basic and acidic residues. A compositionally biased stretch (pro residues) spans 370–380 (VTGPPPGTPQP). 7 WD repeats span residues 436–475 (SHYDGIRSLAFHHSQSALLTASEDGTLKLWNLQKAVTAKK), 489–528 (AHRGPVLAVAMGSNSEYCYSGGADACIHSWKIPDLSMDPY), 542–581 (GHGDAVWGLAFSPTSQRLASCSADGTVRIWDPSSSSPACL), 587–628 (ASEH…ALLT), 635–674 (SGPTQINQVVSHPNQPLTITAHDDRGIRFLDNRTGKPVHS), 677–716 (AHLDAVTCLAVDPNGAFLMSGSHDCSLRLWSLDNKTCVQE), and 723–753 (KHEEAIHAVACHPSKALIASAGADALAKVFV).

The protein belongs to the WD repeat striatin family. Part of the core of STRIPAK complexes composed of PP2A catalytic and scaffolding subunits, the striatins (PP2A regulatory subunits), the striatin-associated proteins MOB4, STRIP1 and STRIP2, PDCD10 and members of the STE20 kinases, such as STK24 and STK26. Interacts with CTTNBP2NL.

It localises to the cytoplasm. Its function is as follows. Calmodulin-binding scaffolding protein which is the center of the striatin-interacting phosphatase and kinase (STRIPAK) complexes. STRIPAK complexes have critical roles in protein (de)phosphorylation and are regulators of multiple signaling pathways including Hippo, MAPK, nuclear receptor and cytoskeleton remodeling. Different types of STRIPAK complexes are involved in a variety of biological processes such as cell growth, differentiation, apoptosis, metabolism and immune regulation. Key regulator of the expanded Hippo signaling pathway by interacting and allowing the inhibition of MAP4K kinases by the STRIPAK complex. This chain is Striatin-4, found in Homo sapiens (Human).